A 453-amino-acid polypeptide reads, in one-letter code: Midnolin (453 aa).

In terms of domain architecture, Ubiquitin-like spans 20-94 (MNLNIQSTTG…LTLLPSVEAG (75 aa)). Disordered regions lie at residues 185–219 (HLASCTPGSTPPTTLSPTASTHRDGPHSSPLTTSV), 231–256 (PCAEQVPCSSRGTEGTSSSASSRSRK), 330–374 (SQAR…QTEN), and 390–434 (QKRL…IDFE). 2 stretches are compositionally biased toward low complexity: residues 188 to 204 (SCTPGSTPPTTLSPTAS) and 239 to 252 (SSRGTEGTSSSASS). Residues 330-362 (SQARNPKATSPQSSEPQQTTHPVGHCQAQTRTC) show a composition bias toward polar residues. A compositionally biased stretch (basic and acidic residues) spans 365 to 374 (SGDRLRQTEN). The segment covering 390 to 399 (QKRLRRKARR) has biased composition (basic residues). Residues 415-428 (RTSSNSSTSSGEGS) show a composition bias toward low complexity.

It localises to the nucleus. Its subcellular location is the cytoplasm. The protein resides in the cytosol. The protein localises to the nucleolus. In terms of biological role, facilitates ubiquitin-independent proteasomal degradation of polycomb protein CBX4. Plays a role in inhibiting the activity of glucokinase GCK and both glucose-induced and basal insulin secretion. This is Midnolin (midn) from Xenopus tropicalis (Western clawed frog).